We begin with the raw amino-acid sequence, 106 residues long: uncharacterized protein (106 aa).

This is an uncharacterized protein from Archaeoglobus fulgidus (strain ATCC 49558 / DSM 4304 / JCM 9628 / NBRC 100126 / VC-16).